The chain runs to 203 residues: Small ribosomal subunit protein uS4 (203 aa).

The region spanning 93–158 (LRLDNVVYRL…QQLVTRFLDL (66 aa)) is the S4 RNA-binding domain.

It belongs to the universal ribosomal protein uS4 family. As to quaternary structure, part of the 30S ribosomal subunit. Contacts protein S5. The interaction surface between S4 and S5 is involved in control of translational fidelity.

One of the primary rRNA binding proteins, it binds directly to 16S rRNA where it nucleates assembly of the body of the 30S subunit. In terms of biological role, with S5 and S12 plays an important role in translational accuracy. The polypeptide is Small ribosomal subunit protein uS4 (Akkermansia muciniphila (strain ATCC BAA-835 / DSM 22959 / JCM 33894 / BCRC 81048 / CCUG 64013 / CIP 107961 / Muc)).